Here is a 552-residue protein sequence, read N- to C-terminus: CTP synthase (552 aa).

An amidoligase domain region spans residues 1-267 (MSKFVFVTGG…AHQTLELLRM (267 aa)). A CTP-binding site is contributed by serine 13. A UTP-binding site is contributed by serine 13. Residues 14 to 19 (SIGKGI) and aspartate 71 each bind ATP. Mg(2+) is bound by residues aspartate 71 and glutamate 141. CTP contacts are provided by residues 148 to 150 (DIE), 188 to 193 (KTKPTQ), and lysine 224. UTP contacts are provided by residues 188-193 (KTKPTQ) and lysine 224. The region spanning 292 to 534 (TVALVGKYVQ…INAVLKRRNA (243 aa)) is the Glutamine amidotransferase type-1 domain. L-glutamine is bound at residue glycine 354. The active-site Nucleophile; for glutamine hydrolysis is cysteine 381. L-glutamine contacts are provided by residues 382–385 (LGMQ), glutamate 405, and arginine 462. Residues histidine 507 and glutamate 509 contribute to the active site.

It belongs to the CTP synthase family. Homotetramer.

The enzyme catalyses UTP + L-glutamine + ATP + H2O = CTP + L-glutamate + ADP + phosphate + 2 H(+). The catalysed reaction is L-glutamine + H2O = L-glutamate + NH4(+). It carries out the reaction UTP + NH4(+) + ATP = CTP + ADP + phosphate + 2 H(+). The protein operates within pyrimidine metabolism; CTP biosynthesis via de novo pathway; CTP from UDP: step 2/2. Its activity is regulated as follows. Allosterically activated by GTP, when glutamine is the substrate; GTP has no effect on the reaction when ammonia is the substrate. The allosteric effector GTP functions by stabilizing the protein conformation that binds the tetrahedral intermediate(s) formed during glutamine hydrolysis. Inhibited by the product CTP, via allosteric rather than competitive inhibition. Catalyzes the ATP-dependent amination of UTP to CTP with either L-glutamine or ammonia as the source of nitrogen. Regulates intracellular CTP levels through interactions with the four ribonucleotide triphosphates. This chain is CTP synthase, found in Synechocystis sp. (strain ATCC 27184 / PCC 6803 / Kazusa).